We begin with the raw amino-acid sequence, 510 residues long: Fumarate hydratase, mitochondrial (510 aa).

The transit peptide at 1-44 (MYRALRLLARSRPLVRAPAAALASAPGLGGAAVPSFWPPNAARM) directs the protein to the mitochondrion. N6-acetyllysine; alternate is present on residues Lys61, Lys66, and Lys80. Lys61, Lys66, and Lys80 each carry N6-succinyllysine; alternate. A phosphothreonine mark is found at Thr85 and Thr90. An N6-acetyllysine modification is found at Lys94. 2 positions are modified to N6-acetyllysine; alternate: Lys115 and Lys122. Residues Lys115 and Lys122 each carry the N6-succinyllysine; alternate modification. Substrate is bound by residues 145 to 147 (SGT), 176 to 179 (HPND), and 186 to 188 (SSN). An N6-acetyllysine modification is found at Lys213. Residue Lys223 is modified to N6-acetyllysine; alternate. Residue Lys223 is modified to N6-succinyllysine; alternate. Residue Thr234 participates in substrate binding. His235 (proton donor/acceptor) is an active-site residue. Thr236 bears the Phosphothreonine; by PRKDC mark. An N6-acetyllysine modification is found at Lys256. Lys292 is modified (N6-acetyllysine; alternate). N6-succinyllysine; alternate is present on Lys292. Residue Ser365 is part of the active site. Residues Ser366 and 371–373 (KVN) contribute to the substrate site. The residue at position 366 (Ser366) is a Phosphoserine. N6-succinyllysine occurs at positions 467 and 473. Residue Lys502 is modified to N6-acetyllysine.

The protein belongs to the class-II fumarase/aspartase family. Fumarase subfamily. In terms of assembly, homotetramer. Interacts with H2AZ1. In terms of processing, phosphorylation at Thr-236 by PRKDC in response to DNA damage promotes translocation to the nucleus and recruitment to DNA double-strand breaks (DSBs). Expressed in red blood cells; underexpressed in red blood cells (cytoplasm) of patients with hereditary non-spherocytic hemolytic anemia of unknown etiology.

It localises to the mitochondrion. It is found in the cytoplasm. The protein resides in the cytosol. The protein localises to the nucleus. Its subcellular location is the chromosome. The enzyme catalyses (S)-malate = fumarate + H2O. It functions in the pathway carbohydrate metabolism; tricarboxylic acid cycle; (S)-malate from fumarate: step 1/1. In terms of biological role, catalyzes the reversible stereospecific interconversion of fumarate to L-malate. Experiments in other species have demonstrated that specific isoforms of this protein act in defined pathways and favor one direction over the other. Catalyzes the hydration of fumarate to L-malate in the tricarboxylic acid (TCA) cycle to facilitate a transition step in the production of energy in the form of NADH. Its function is as follows. Catalyzes the dehydration of L-malate to fumarate. Fumarate metabolism in the cytosol plays a role during urea cycle and arginine metabolism; fumarate being a by-product of the urea cycle and amino-acid catabolism. Also plays a role in DNA repair by promoting non-homologous end-joining (NHEJ). In response to DNA damage and phosphorylation by PRKDC, translocates to the nucleus and accumulates at DNA double-strand breaks (DSBs): acts by catalyzing formation of fumarate, an inhibitor of KDM2B histone demethylase activity, resulting in enhanced dimethylation of histone H3 'Lys-36' (H3K36me2). This is Fumarate hydratase, mitochondrial from Homo sapiens (Human).